Reading from the N-terminus, the 322-residue chain is Probable 2-oxoglutarate-dependent dioxygenase AOP1 (322 aa).

The Fe2OG dioxygenase domain maps to threonine 165–proline 271. Fe cation is bound by residues histidine 195, aspartate 197, and histidine 252. 2-oxoglutarate is bound at residue arginine 262.

Belongs to the iron/ascorbate-dependent oxidoreductase family. Fe(2+) is required as a cofactor.

In terms of biological role, probable 2-oxoglutarate-dependent dioxygenase that may be involved in glucosinolates biosynthesis. May play a role in the production of aliphatic glucosinolates. The protein is Probable 2-oxoglutarate-dependent dioxygenase AOP1 (AOP1) of Arabidopsis thaliana (Mouse-ear cress).